A 95-amino-acid polypeptide reads, in one-letter code: uncharacterized protein (95 aa).

The signal sequence occupies residues 1 to 21 (MKVLSISLIFFALLLTGCSQV).

This is an uncharacterized protein from Archaeoglobus fulgidus (strain ATCC 49558 / DSM 4304 / JCM 9628 / NBRC 100126 / VC-16).